Consider the following 612-residue polypeptide: Probable methyltransferase PMT9 (612 aa).

Residues 1–14 (MKHFRTERVRATPK) lie on the Cytoplasmic side of the membrane. A helical; Signal-anchor for type II membrane protein transmembrane segment spans residues 15–35 (LFTYVLVGFIALLGLTCLYYG). At 36–612 (SSFAPGSRKS…LWSLPAISVS (577 aa)) the chain is on the lumenal side. 3 N-linked (GlcNAc...) asparagine glycosylation sites follow: Asn107, Asn383, and Asn562.

This sequence belongs to the methyltransferase superfamily.

The protein resides in the golgi apparatus membrane. The sequence is that of Probable methyltransferase PMT9 from Arabidopsis thaliana (Mouse-ear cress).